A 290-amino-acid chain; its full sequence is Beta-lactamase OXY-2 (290 aa).

Residues 1–27 (MIKSSWRKIAMLAAAVPLLLASGALWA) form the signal peptide. Ser72 acts as the Acyl-ester intermediate in catalysis. 236 to 238 (KTG) contacts substrate.

The protein belongs to the class-A beta-lactamase family.

The catalysed reaction is a beta-lactam + H2O = a substituted beta-amino acid. Functionally, hydrolyzes broad-spectrum beta-lactam antibiotics. Active against all third-generation cephalosporins but ceftazidime. The protein is Beta-lactamase OXY-2 (bla) of Klebsiella oxytoca.